We begin with the raw amino-acid sequence, 138 residues long: Cellular retinoic acid-binding protein 2 (138 aa).

A Nuclear localization signal motif is present at residues 21–31; that stretch reads KVLGVNVMLRK. Lys-102 participates in a covalent cross-link: Glycyl lysine isopeptide (Lys-Gly) (interchain with G-Cter in SUMO). 133 to 135 contributes to the all-trans-retinoate binding site; the sequence is RVY.

It belongs to the calycin superfamily. Fatty-acid binding protein (FABP) family. Interacts with importin alpha, RXR and RARA. Sumoylated in response to retinoic acid binding, sumoylation is critical for dissociation from ER and subsequent nuclear translocation.

It is found in the cytoplasm. The protein localises to the endoplasmic reticulum. Its subcellular location is the nucleus. Its function is as follows. Transports retinoic acid to the nucleus. Regulates the access of retinoic acid to the nuclear retinoic acid receptors. The sequence is that of Cellular retinoic acid-binding protein 2 (CRABP2) from Bos taurus (Bovine).